The chain runs to 153 residues: MAPKKAAKGDEAPKEVVSLGPTVREGEHVFGVAHIFASFNDTFVHVTDLSGRETISRVTGGMKVKADRDESSPYAAMLAAQDVAQKCKELGITALHIKLRATGGNRTKTPGPGAQSALRALARAGMKIGRIEDVTPIPTDSTRRKGGRRGRRL.

Belongs to the universal ribosomal protein uS11 family.

The protein is Small ribosomal subunit protein uS11 (RPS14) of Chlamydomonas reinhardtii (Chlamydomonas smithii).